Consider the following 501-residue polypeptide: Eukaryotic translation initiation factor 3 subunit E (501 aa).

Positions 245-423 constitute a PCI domain; that stretch reads CDLFFYTPYL…ESIESTSTNV (179 aa). A phosphoserine mark is found at S477 and S479.

It belongs to the eIF-3 subunit E family. In terms of assembly, component of the eukaryotic translation initiation factor 3 (eIF-3) complex. The eIF-3 complex appears to include tif32/eif3a, SPAC25G10.08/eif3b, tif33/eif3c, SPBC4C3.07/eif3f, tif35/eif3g and sum1/eif3i. This set of common subunits may also associate exclusively with either moe1/eif3d and int6/eif3e, or with SPAC821.05/eif3h and SPAC1751.03/eif3m. The eIF-3 complex may also include SPAC3A12.13c/eif3j. Also interacts with the proteasome via rpn501/rpn502.

It is found in the cytoplasm. Its function is as follows. Component of the eukaryotic translation initiation factor 3 (eIF-3) complex, which is involved in protein synthesis of a specialized repertoire of mRNAs and, together with other initiation factors, stimulates binding of mRNA and methionyl-tRNAi to the 40S ribosome. The eIF-3 complex specifically targets and initiates translation of a subset of mRNAs involved in cell proliferation (Potential). Required for maintaining the basal level of atf1 and for transcriptional activation of core environmental stress response genes (CESR genes) in response to histidine starvation. May positively regulate proteasome activity. Required for nuclear localization of the proteasome subunit rpn501/rpn502. The sequence is that of Eukaryotic translation initiation factor 3 subunit E (int6) from Schizosaccharomyces pombe (strain 972 / ATCC 24843) (Fission yeast).